A 256-amino-acid polypeptide reads, in one-letter code: Enolase-phosphatase E1 (256 aa).

Mg(2+)-binding residues include aspartate 14 and glutamate 16. Residues 142–143 (SS) and lysine 176 each bind substrate. Aspartate 201 serves as a coordination point for Mg(2+).

It belongs to the HAD-like hydrolase superfamily. MasA/MtnC family. Monomer. Mg(2+) serves as cofactor.

It localises to the cytoplasm. Its subcellular location is the nucleus. It catalyses the reaction 5-methylsulfanyl-2,3-dioxopentyl phosphate + H2O = 1,2-dihydroxy-5-(methylsulfanyl)pent-1-en-3-one + phosphate. It participates in amino-acid biosynthesis; L-methionine biosynthesis via salvage pathway; L-methionine from S-methyl-5-thio-alpha-D-ribose 1-phosphate: step 3/6. The protein operates within amino-acid biosynthesis; L-methionine biosynthesis via salvage pathway; L-methionine from S-methyl-5-thio-alpha-D-ribose 1-phosphate: step 4/6. Bifunctional enzyme that catalyzes the enolization of 2,3-diketo-5-methylthiopentyl-1-phosphate (DK-MTP-1-P) into the intermediate 2-hydroxy-3-keto-5-methylthiopentenyl-1-phosphate (HK-MTPenyl-1-P), which is then dephosphorylated to form the acireductone 1,2-dihydroxy-3-keto-5-methylthiopentene (DHK-MTPene). The protein is Enolase-phosphatase E1 of Drosophila melanogaster (Fruit fly).